A 372-amino-acid chain; its full sequence is N-methyl-L-tryptophan oxidase (372 aa).

4-34 is an FAD binding site; it reads DLIIIGSGSVGAAAGYYATRAGLNVLMTDAH. An S-8alpha-FAD cysteine modification is found at Cys-308.

This sequence belongs to the MSOX/MTOX family. MTOX subfamily. Monomer. The cofactor is FAD.

The enzyme catalyses N(alpha)-methyl-L-tryptophan + O2 + H2O = L-tryptophan + formaldehyde + H2O2. Functionally, catalyzes the oxidative demethylation of N-methyl-L-tryptophan. The sequence is that of N-methyl-L-tryptophan oxidase from Shigella dysenteriae serotype 1 (strain Sd197).